The sequence spans 306 residues: Oligopeptide transport system permease protein OppB (306 aa).

Topologically, residues 1 to 12 (MLKFILRRCLEA) are cytoplasmic. Residues 13–30 (IPTLFILITISFFMMRLA) form a helical membrane-spanning segment. At 31–101 (PGSPFTGERA…ASFPVSAKLG (71 aa)) the chain is on the periplasmic side. Residues 94–293 (FPVSAKLGAA…ALTILFNAIV (200 aa)) form the ABC transmembrane type-1 domain. Residues 102-121 (AAAFLLAVIIGVSAGVIAAL) form a helical membrane-spanning segment. Topologically, residues 122-133 (KQNTRWDYTVMG) are cytoplasmic. A helical transmembrane segment spans residues 134–156 (FAMTGVVIPSFVVAPLLVMVFAI). Over 157–165 (TLQWLPGGG) the chain is Periplasmic. The chain crosses the membrane as a helical span at residues 166–188 (WNGGALKFMILPMVALSLAYIAS). Residues 189–227 (IARITRGSMIEVLHSNFIRTARAKGLPMRRIIFRHALKP) lie on the Cytoplasmic side of the membrane. A helical transmembrane segment spans residues 228–250 (ALLPVLSYMGPAFVGIITGSMVI). Residues 251–277 (ETIYGLPGIGQLFVNGALNRDYSLVLS) are Periplasmic-facing. A helical membrane pass occupies residues 278-300 (LTILVGALTILFNAIVDVLYAVI). Residues 301-306 (DPKIRY) lie on the Cytoplasmic side of the membrane.

This sequence belongs to the binding-protein-dependent transport system permease family. OppBC subfamily. The complex is composed of two ATP-binding proteins (OppD and OppF), two transmembrane proteins (OppB and OppC) and a solute-binding protein (OppA).

It is found in the cell inner membrane. In terms of biological role, part of the ABC transporter complex OppABCDF involved in the uptake of oligopeptides, including the cell wall murein tripeptide L-alanyl-gamma-D-glutamyl-meso-diaminopimelate. Responsible for the translocation of the substrate across the membrane. Plays an important nutritional role and is involved in the recycling of cell wall peptides. The polypeptide is Oligopeptide transport system permease protein OppB (Salmonella typhimurium (strain LT2 / SGSC1412 / ATCC 700720)).